A 412-amino-acid chain; its full sequence is Peptidase T (412 aa).

His-78 contributes to the Zn(2+) binding site. Asp-80 is a catalytic residue. Asp-140 is a binding site for Zn(2+). Catalysis depends on Glu-173, which acts as the Proton acceptor. Zn(2+)-binding residues include Glu-174, Asp-196, and His-379.

Belongs to the peptidase M20B family. Zn(2+) serves as cofactor.

Its subcellular location is the cytoplasm. It carries out the reaction Release of the N-terminal residue from a tripeptide.. In terms of biological role, cleaves the N-terminal amino acid of tripeptides. The polypeptide is Peptidase T (Edwardsiella ictaluri (strain 93-146)).